We begin with the raw amino-acid sequence, 169 residues long: MTRKQRRMTIIGGSLAVLALAAALVLNALRDSIVFFSTPTMVAEKHVQAGKRFRLGGLVQPGSLQRGDNLAVSFEVADGNAKLPVAYKGILPDLFREGQGVVAEGALDANGVFKADTVLAKHDETYMPKDVADALKKQGHWKDDYGGKASDGVKPAATTAQGNPQGAVR.

Over 1–7 (MTRKQRR) the chain is Cytoplasmic. Residues 8 to 28 (MTIIGGSLAVLALAAALVLNA) traverse the membrane as a helical; Signal-anchor for type II membrane protein segment. Residues 29-169 (LRDSIVFFST…AQGNPQGAVR (141 aa)) lie on the Periplasmic side of the membrane. Heme-binding residues include His-122 and Tyr-126. The interval 143 to 169 (DDYGGKASDGVKPAATTAQGNPQGAVR) is disordered. Residues 158 to 169 (TTAQGNPQGAVR) show a composition bias toward polar residues.

It belongs to the CcmE/CycJ family.

It localises to the cell inner membrane. Its function is as follows. Heme chaperone required for the biogenesis of c-type cytochromes. Transiently binds heme delivered by CcmC and transfers the heme to apo-cytochromes in a process facilitated by CcmF and CcmH. This chain is Cytochrome c-type biogenesis protein CcmE, found in Bradyrhizobium diazoefficiens (strain JCM 10833 / BCRC 13528 / IAM 13628 / NBRC 14792 / USDA 110).